The following is a 147-amino-acid chain: UPF0306 protein KPN78578_35330 (147 aa).

Belongs to the UPF0306 family.

The polypeptide is UPF0306 protein KPN78578_35330 (Klebsiella pneumoniae subsp. pneumoniae (strain ATCC 700721 / MGH 78578)).